A 428-amino-acid polypeptide reads, in one-letter code: Histidine--tRNA ligase (428 aa).

It belongs to the class-II aminoacyl-tRNA synthetase family. Homodimer.

The protein resides in the cytoplasm. The enzyme catalyses tRNA(His) + L-histidine + ATP = L-histidyl-tRNA(His) + AMP + diphosphate + H(+). This Lactobacillus delbrueckii subsp. bulgaricus (strain ATCC 11842 / DSM 20081 / BCRC 10696 / JCM 1002 / NBRC 13953 / NCIMB 11778 / NCTC 12712 / WDCM 00102 / Lb 14) protein is Histidine--tRNA ligase.